A 20-amino-acid polypeptide reads, in one-letter code: Unknown protein from 2D-PAGE of needles (20 aa).

The protein is Unknown protein from 2D-PAGE of needles of Pinus pinaster (Maritime pine).